The primary structure comprises 313 residues: Putative HTH-type transcriptional regulatory protein Msm_0453 (313 aa).

One can recognise an HTH cro/C1-type domain in the interval 131–189 (IKQYREEYSLSLKDLADLAHVSRATMYKYENEIVRANTETAMILEEILNTKVTLDIDLL). Residues 142–161 (LKDLADLAHVSRATMYKYEN) constitute a DNA-binding region (H-T-H motif).

This Methanobrevibacter smithii (strain ATCC 35061 / DSM 861 / OCM 144 / PS) protein is Putative HTH-type transcriptional regulatory protein Msm_0453.